A 194-amino-acid polypeptide reads, in one-letter code: Inosine triphosphate pyrophosphatase (194 aa).

Residue 10 to 15 (TGNANK) coordinates ITP. Residue glutamate 41 coordinates Mg(2+). Residues lysine 54, 72–73 (DT), lysine 89, 147–150 (FGWD), lysine 172, and 177–178 (QR) each bind ITP.

It belongs to the HAM1 NTPase family. In terms of assembly, homodimer. Requires Mg(2+) as cofactor. It depends on Mn(2+) as a cofactor.

It is found in the cytoplasm. The protein localises to the nucleus. The catalysed reaction is ITP + H2O = IMP + diphosphate + H(+). The enzyme catalyses dITP + H2O = dIMP + diphosphate + H(+). It catalyses the reaction XTP + H2O = XMP + diphosphate + H(+). Its function is as follows. Pyrophosphatase that hydrolyzes non-canonical purine nucleotides such as inosine triphosphate (ITP), deoxyinosine triphosphate (dITP) or xanthosine 5'-triphosphate (XTP) to their respective monophosphate derivatives. The enzyme does not distinguish between the deoxy- and ribose forms. Probably excludes non-canonical purines from RNA and DNA precursor pools, thus preventing their incorporation into RNA and DNA and avoiding chromosomal lesions. The sequence is that of Inosine triphosphate pyrophosphatase from Kluyveromyces lactis (strain ATCC 8585 / CBS 2359 / DSM 70799 / NBRC 1267 / NRRL Y-1140 / WM37) (Yeast).